A 189-amino-acid chain; its full sequence is Elongation factor P (189 aa).

Belongs to the elongation factor P family.

The protein resides in the cytoplasm. The protein operates within protein biosynthesis; polypeptide chain elongation. Its function is as follows. Involved in peptide bond synthesis. Stimulates efficient translation and peptide-bond synthesis on native or reconstituted 70S ribosomes in vitro. Probably functions indirectly by altering the affinity of the ribosome for aminoacyl-tRNA, thus increasing their reactivity as acceptors for peptidyl transferase. In Rhizobium leguminosarum bv. trifolii (strain WSM2304), this protein is Elongation factor P.